The chain runs to 400 residues: Tryptophan synthase beta chain (400 aa).

Residue Lys92 is modified to N6-(pyridoxal phosphate)lysine.

The protein belongs to the TrpB family. In terms of assembly, tetramer of two alpha and two beta chains. Requires pyridoxal 5'-phosphate as cofactor.

The catalysed reaction is (1S,2R)-1-C-(indol-3-yl)glycerol 3-phosphate + L-serine = D-glyceraldehyde 3-phosphate + L-tryptophan + H2O. It participates in amino-acid biosynthesis; L-tryptophan biosynthesis; L-tryptophan from chorismate: step 5/5. In terms of biological role, the beta subunit is responsible for the synthesis of L-tryptophan from indole and L-serine. In Neisseria meningitidis serogroup C (strain 053442), this protein is Tryptophan synthase beta chain.